Consider the following 180-residue polypeptide: uncharacterized protein (180 aa).

Positions 1–31 are disordered; it reads MSTYEEEHGIQQNSRDYQEVGGTSQEEQRRQ. An N-acetylserine modification is found at S2. The RING-type zinc-finger motif lies at 109–153; it reads CSICYTNYLEDEYPLVVELPHCHHKFDLECLSVWLSRSTTCPLCR.

This is an uncharacterized protein from Saccharomyces cerevisiae (strain ATCC 204508 / S288c) (Baker's yeast).